Consider the following 595-residue polypeptide: Apolipoprotein N-acyltransferase 2 (595 aa).

A run of 5 helical transmembrane segments spans residues 30 to 50, 63 to 83, 95 to 115, 167 to 187, and 210 to 230; these read FLAF…FGFF, LFFH…HWII, VVAI…FPIF, AEIT…YTLF, and FITL…FLFK. The 315-residue stretch at 241–555 folds into the CN hydrolase domain; the sequence is LNVLIVQPDA…AEALSETIDV (315 aa). Glutamate 293 serves as the catalytic Proton acceptor. The active site involves lysine 372. The active-site Nucleophile is the cysteine 463. Residues 569-589 traverse the membrane as a helical segment; the sequence is LIPWLMLFLTGIYYLNLLIGI.

The protein belongs to the CN hydrolase family. Apolipoprotein N-acyltransferase subfamily.

The protein localises to the cell inner membrane. It carries out the reaction N-terminal S-1,2-diacyl-sn-glyceryl-L-cysteinyl-[lipoprotein] + a glycerophospholipid = N-acyl-S-1,2-diacyl-sn-glyceryl-L-cysteinyl-[lipoprotein] + a 2-acyl-sn-glycero-3-phospholipid + H(+). The protein operates within protein modification; lipoprotein biosynthesis (N-acyl transfer). Its function is as follows. Catalyzes the phospholipid dependent N-acylation of the N-terminal cysteine of apolipoprotein, the last step in lipoprotein maturation. The protein is Apolipoprotein N-acyltransferase 2 of Leptospira interrogans serogroup Icterohaemorrhagiae serovar Lai (strain 56601).